A 713-amino-acid chain; its full sequence is Polyribonucleotide nucleotidyltransferase (713 aa).

Positions 498 and 504 each coordinate Mg(2+). In terms of domain architecture, KH spans 565-631 (PRILSLKVPV…RIEDLTREAK (67 aa)). Residues 633-701 (GEIYEGTVTR…ERGKIDLIRP (69 aa)) form the S1 motif domain.

This sequence belongs to the polyribonucleotide nucleotidyltransferase family. Mg(2+) is required as a cofactor.

The protein localises to the cytoplasm. The enzyme catalyses RNA(n+1) + phosphate = RNA(n) + a ribonucleoside 5'-diphosphate. Involved in mRNA degradation. Catalyzes the phosphorolysis of single-stranded polyribonucleotides processively in the 3'- to 5'-direction. The chain is Polyribonucleotide nucleotidyltransferase from Thermus thermophilus (strain ATCC 27634 / DSM 579 / HB8).